Consider the following 168-residue polypeptide: MVYEVLAVVSGGLLGFGVTWAYLNYALKEEKAKEEEVMRAKISNVTSSVEPKLETKMEKPPSDLSEFVDYLCNKYMLSDVTLLTPDGLPIASNSPTPEEDAAIAPELIKVGKGMLNSSRILLSGENTRVLVMQVNPDVLLHARVARDISKREIERIGEEVNMVLEGII.

The signal sequence occupies residues 1–21 (MVYEVLAVVSGGLLGFGVTWA).

This is an uncharacterized protein from Archaeoglobus fulgidus (strain ATCC 49558 / DSM 4304 / JCM 9628 / NBRC 100126 / VC-16).